An 812-amino-acid polypeptide reads, in one-letter code: Plasminogen (812 aa).

A signal peptide spans 1 to 19; sequence MDHKEVILLFLLLLKPGQG. The 79-residue stretch at 20–98 folds into the PAN domain; sequence DSLDGYISTQ…RDVILFEKRV (79 aa). 21 cysteine pairs are disulfide-bonded: Cys-49–Cys-73, Cys-53–Cys-61, Cys-103–Cys-181, Cys-124–Cys-164, Cys-152–Cys-176, Cys-185–Cys-262, Cys-188–Cys-316, Cys-206–Cys-245, Cys-234–Cys-257, Cys-275–Cys-352, Cys-296–Cys-335, Cys-324–Cys-347, Cys-377–Cys-454, Cys-398–Cys-437, Cys-426–Cys-449, Cys-481–Cys-560, Cys-502–Cys-543, Cys-531–Cys-555, Cys-568–Cys-687, Cys-578–Cys-586, and Cys-609–Cys-625. 5 Kringle domains span residues 103–181, 184–262, 275–352, 377–454, and 481–560; these read CKTG…IPEC, ECMY…IPRC, CLKG…IPSC, CYQS…LKRC, and CMYG…IPLC. The region spanning 582 to 810 is the Peptidase S1 domain; that stretch reads VVGGCVANPH…FVDWIEREMR (229 aa). Phosphoserine is present on Ser-598. Active-site charge relay system residues include His-624 and Asp-667. Ser-690 is modified (phosphoserine). Cystine bridges form between Cys-701–Cys-768, Cys-731–Cys-747, and Cys-758–Cys-786. Ser-762 (charge relay system) is an active-site residue.

It belongs to the peptidase S1 family. Plasminogen subfamily. Interacts (both mature PLG and the angiostatin peptide) with AMOT and CSPG4. Interacts (via the Kringle domains) with HRG; the interaction tethers PLG to the cell surface and enhances its activation. Interacts (via Kringle 4 domain) with ADA; the interaction stimulates PLG activation when in complex with DPP4. Angiostatin: Interacts with ATP5F1A; the interaction inhibits most of the angiogenic effects of angiostatin. Post-translationally, in the presence of the inhibitor, the activation involves only cleavage after Arg-581, yielding two chains held together by two disulfide bonds. In the absence of the inhibitor, the activation involves additionally the removal of the activation peptide.

The protein resides in the secreted. The enzyme catalyses Preferential cleavage: Lys-|-Xaa &gt; Arg-|-Xaa, higher selectivity than trypsin. Converts fibrin into soluble products.. With respect to regulation, converted into plasmin by plasminogen activators, both plasminogen and its activator being bound to fibrin. Cannot be activated with streptokinase. In terms of biological role, plasmin dissolves the fibrin of blood clots and acts as a proteolytic factor in a variety of other processes including embryonic development, tissue remodeling, tumor invasion, and inflammation. In ovulation, weakens the walls of the Graafian follicle. It activates the urokinase-type plasminogen activator, collagenases and several complement zymogens, such as C1, C4 and C5. Cleavage of fibronectin and laminin leads to cell detachment and apoptosis. Also cleaves fibrin, thrombospondin and von Willebrand factor. Its role in tissue remodeling and tumor invasion may be modulated by CSPG4. Binds to cells. Angiostatin is an angiogenesis inhibitor that blocks neovascularization and growth of experimental primary and metastatic tumors in vivo. This Mus musculus (Mouse) protein is Plasminogen (Plg).